The following is a 317-amino-acid chain: Carbamate kinase (317 aa).

The protein belongs to the carbamate kinase family. In terms of assembly, homodimer.

It carries out the reaction hydrogencarbonate + NH4(+) + ATP = carbamoyl phosphate + ADP + H2O + H(+). It participates in metabolic intermediate metabolism; carbamoyl phosphate degradation; CO(2) and NH(3) from carbamoyl phosphate: step 1/1. The polypeptide is Carbamate kinase (CBK) (Giardia intestinalis (Giardia lamblia)).